The following is a 268-amino-acid chain: Tryptophan synthase alpha chain (268 aa).

Catalysis depends on proton acceptor residues glutamate 49 and aspartate 60.

This sequence belongs to the TrpA family. As to quaternary structure, tetramer of two alpha and two beta chains.

It catalyses the reaction (1S,2R)-1-C-(indol-3-yl)glycerol 3-phosphate + L-serine = D-glyceraldehyde 3-phosphate + L-tryptophan + H2O. Its pathway is amino-acid biosynthesis; L-tryptophan biosynthesis; L-tryptophan from chorismate: step 5/5. Its function is as follows. The alpha subunit is responsible for the aldol cleavage of indoleglycerol phosphate to indole and glyceraldehyde 3-phosphate. The protein is Tryptophan synthase alpha chain of Aeromonas salmonicida (strain A449).